The chain runs to 352 residues: Ion-translocating oxidoreductase complex subunit D (352 aa).

4 consecutive transmembrane segments (helical) span residues 20-40, 42-62, 89-109, and 123-143; these read IMLLVLLAAVPGIAAQLWFFG, GTLVQILLASVSALLAEALVL, IPPLAPWWMVVLGTVFAVIIA, and PAMIGYVVLLISFPVQMTSWL. The residue at position 187 (Thr187) is an FMN phosphoryl threonine. A run of 5 helical transmembrane segments spans residues 214 to 234, 242 to 262, 267 to 287, 301 to 321, and 322 to 342; these read ILAGAGWQWVNLAWLAGGVWL, WHIPLSFLVTLALCATLGWLF, LASPQIHLLSGATMLGAFFIL, LIFGALAGLLVWLIRSFGGYP, and DGVAFAVLLANITVPLIDYYT.

The protein belongs to the NqrB/RnfD family. The complex is composed of six subunits: RsxA, RsxB, RsxC, RsxD, RsxE and RsxG. It depends on FMN as a cofactor.

The protein localises to the cell inner membrane. Functionally, part of a membrane-bound complex that couples electron transfer with translocation of ions across the membrane. Required to maintain the reduced state of SoxR. This chain is Ion-translocating oxidoreductase complex subunit D, found in Escherichia coli O17:K52:H18 (strain UMN026 / ExPEC).